Consider the following 335-residue polypeptide: Eukaryotic translation initiation factor 3 subunit I (335 aa).

WD repeat units follow at residues Gly-8–Thr-47, Gly-50–Asp-91, Cys-145–Asn-184, Glu-189–Thr-228, and Gly-286–Thr-325.

It belongs to the eIF-3 subunit I family. As to quaternary structure, component of the eukaryotic translation initiation factor 3 (eIF-3) complex.

The protein localises to the cytoplasm. Its function is as follows. Component of the eukaryotic translation initiation factor 3 (eIF-3) complex, which is involved in protein synthesis of a specialized repertoire of mRNAs and, together with other initiation factors, stimulates binding of mRNA and methionyl-tRNAi to the 40S ribosome. The eIF-3 complex specifically targets and initiates translation of a subset of mRNAs involved in cell proliferation. The sequence is that of Eukaryotic translation initiation factor 3 subunit I (tif34) from Sclerotinia sclerotiorum (strain ATCC 18683 / 1980 / Ss-1) (White mold).